A 62-amino-acid polypeptide reads, in one-letter code: uncharacterized protein (62 aa).

This is an uncharacterized protein from Escherichia coli O157:H7.